The sequence spans 572 residues: Urease subunit alpha (572 aa).

The 439-residue stretch at 134–572 folds into the Urease domain; that stretch reads GGIDSHIHFI…LPMTQRYFLF (439 aa). Residues histidine 139, histidine 141, and lysine 222 each contribute to the Ni(2+) site. The residue at position 222 (lysine 222) is an N6-carboxylysine. Residue histidine 224 participates in substrate binding. Ni(2+)-binding residues include histidine 251 and histidine 277. The active-site Proton donor is the histidine 325. Aspartate 365 provides a ligand contact to Ni(2+).

This sequence belongs to the metallo-dependent hydrolases superfamily. Urease alpha subunit family. In terms of assembly, heterotrimer of UreA (gamma), UreB (beta) and UreC (alpha) subunits. Three heterotrimers associate to form the active enzyme. Ni cation serves as cofactor. In terms of processing, carboxylation allows a single lysine to coordinate two nickel ions.

Its subcellular location is the cytoplasm. It catalyses the reaction urea + 2 H2O + H(+) = hydrogencarbonate + 2 NH4(+). Its pathway is nitrogen metabolism; urea degradation; CO(2) and NH(3) from urea (urease route): step 1/1. This is Urease subunit alpha from Polaromonas sp. (strain JS666 / ATCC BAA-500).